The chain runs to 160 residues: uncharacterized protein (160 aa).

A helical membrane pass occupies residues 8-28 (LLFILVFISGFILFTVYSYTA).

It is found in the membrane. This is an uncharacterized protein from Escherichia coli (strain K12).